Consider the following 648-residue polypeptide: PTS system N-acetylglucosamine-specific EIICBA component (648 aa).

Methionine 1 is modified (N-formylmethionine). Residues 1–371 enclose the PTS EIIC type-1 domain; the sequence is MNILGFFQRL…FNLKTPGRED (371 aa). 12 helical membrane-spanning segments follow: residues 16-36, 38-58, 70-90, 92-112, 132-152, 159-179, 192-212, 232-252, 260-280, 282-302, 303-323, and 339-359; these read LPIA…PDLL, VAFI…IFAI, GAAA…MVTI, PEIN…GAAY, FVPI…GYVW, IHAG…IFGF, VLNT…GTVF, GFFP…YFAA, VGGM…TEPL, FLFM…TGIS, LFVA…GAID, and MLLV…SLVI. The PTS EIIB type-1 domain occupies 390–472; that stretch reads TQLATNYIAA…KKVVARGPVA (83 aa). Cysteine 412 acts as the Phosphocysteine intermediate; for EIIB activity in catalysis. Cysteine 412 bears the Phosphocysteine; by EIIA mark. The region spanning 517–621 is the PTS EIIA type-1 domain; sequence DEAFASKAVG…SMISPVVCSN (105 aa). Zn(2+) contacts are provided by histidine 554 and histidine 569. The active-site Tele-phosphohistidine intermediate; for EIIA activity is histidine 569. Residue histidine 569 is modified to Phosphohistidine; by HPr.

Requires Zn(2+) as cofactor. 60% of isolated protein was N-formylated.

Its subcellular location is the cell inner membrane. It catalyses the reaction N(pros)-phospho-L-histidyl-[protein] + N-acetyl-D-glucosamine(out) = N-acetyl-D-glucosamine 6-phosphate(in) + L-histidyl-[protein]. P-chloromercuribenzoate inhibits the accumulation of both N-acetyl-D-glucosamine and antibiotic streptozotocin (2-deoxy-2-(3-methyl-3-nitrosoureido)-D-glucopyranose). N-acetyl-D-glucosamine is a competitive inhibitor for the uptake of streptozotocin. In terms of biological role, the phosphoenolpyruvate-dependent sugar phosphotransferase system (sugar PTS), a major carbohydrate active transport system, catalyzes the phosphorylation of incoming sugar substrates concomitantly with their translocation across the cell membrane. This system is involved in N-acetylglucosamine transport. It can also transport and phosphorylate the antibiotic streptozotocin. Could play a significant role in the recycling of peptidoglycan. This is PTS system N-acetylglucosamine-specific EIICBA component from Escherichia coli (strain K12).